Reading from the N-terminus, the 767-residue chain is GPI ethanolamine phosphate transferase 2 (767 aa).

Residues Asn186 and Asn401 are each glycosylated (N-linked (GlcNAc...) asparagine). Helical transmembrane passes span 407-427 (LGLFVAALAVLLSFFPAYGLG) and 434-454 (VTFLMLIIISYGGMMFASSYV). A glycan (N-linked (GlcNAc...) asparagine) is linked at Asn490. 3 helical membrane-spanning segments follow: residues 513 to 533 (ILWALIILTYFDTCMHLCLNS), 538 to 558 (IWRSAAILTTIAAFFFKLVFV), and 595 to 615 (IPIFLMFRLQAIILDFLKMSA). An N-linked (GlcNAc...) asparagine glycan is attached at Asn627. A run of 3 helical transmembrane segments spans residues 655 to 675 (SVVLVGVLTFISNWAGPIWWA), 695 to 715 (TLLTFHAATSLMSVMAACTML), and 733 to 755 (LAWTILNHMFINLPATANVSQVL).

Belongs to the PIGG/PIGN/PIGO family. PIGG subfamily.

The protein resides in the endoplasmic reticulum membrane. Its pathway is glycolipid biosynthesis; glycosylphosphatidylinositol-anchor biosynthesis. Functionally, ethanolamine phosphate transferase involved in glycosylphosphatidylinositol-anchor biosynthesis. Transfers ethanolamine phosphate to the GPI second mannose. This Aspergillus fumigatus (strain ATCC MYA-4609 / CBS 101355 / FGSC A1100 / Af293) (Neosartorya fumigata) protein is GPI ethanolamine phosphate transferase 2 (las21).